The sequence spans 585 residues: Putative ABC transporter ATP-binding protein MG187 (585 aa).

In terms of domain architecture, ABC transporter spans 8-468; that stretch reads IELKNIVVDF…PANEFVARFL (461 aa). 40–47 is a binding site for ATP; it reads GPSGCGKT.

It belongs to the ABC transporter superfamily.

This is Putative ABC transporter ATP-binding protein MG187 from Mycoplasma genitalium (strain ATCC 33530 / DSM 19775 / NCTC 10195 / G37) (Mycoplasmoides genitalium).